The primary structure comprises 1070 residues: RecBCD enzyme subunit RecC (1070 aa).

Belongs to the RecC family. Heterotrimer of RecB, RecC and RecD. All subunits contribute to DNA-binding.

Its function is as follows. A helicase/nuclease that prepares dsDNA breaks (DSB) for recombinational DNA repair. Binds to DSBs and unwinds DNA via a highly rapid and processive ATP-dependent bidirectional helicase activity. Unwinds dsDNA until it encounters a Chi (crossover hotspot instigator) sequence from the 3' direction. Cuts ssDNA a few nucleotides 3' to the Chi site. The properties and activities of the enzyme are changed at Chi. The Chi-altered holoenzyme produces a long 3'-ssDNA overhang and facilitates RecA-binding to the ssDNA for homologous DNA recombination and repair. Holoenzyme degrades any linearized DNA that is unable to undergo homologous recombination. In the holoenzyme this subunit recognizes the wild-type Chi sequence, and when added to isolated RecB increases its ATP-dependent helicase processivity. The protein is RecBCD enzyme subunit RecC of Buchnera aphidicola subsp. Acyrthosiphon pisum (strain APS) (Acyrthosiphon pisum symbiotic bacterium).